The following is a 177-amino-acid chain: ATP synthase subunit delta (177 aa).

It belongs to the ATPase delta chain family. As to quaternary structure, F-type ATPases have 2 components, F(1) - the catalytic core - and F(0) - the membrane proton channel. F(1) has five subunits: alpha(3), beta(3), gamma(1), delta(1), epsilon(1). F(0) has three main subunits: a(1), b(2) and c(10-14). The alpha and beta chains form an alternating ring which encloses part of the gamma chain. F(1) is attached to F(0) by a central stalk formed by the gamma and epsilon chains, while a peripheral stalk is formed by the delta and b chains.

Its subcellular location is the cell inner membrane. Its function is as follows. F(1)F(0) ATP synthase produces ATP from ADP in the presence of a proton or sodium gradient. F-type ATPases consist of two structural domains, F(1) containing the extramembraneous catalytic core and F(0) containing the membrane proton channel, linked together by a central stalk and a peripheral stalk. During catalysis, ATP synthesis in the catalytic domain of F(1) is coupled via a rotary mechanism of the central stalk subunits to proton translocation. In terms of biological role, this protein is part of the stalk that links CF(0) to CF(1). It either transmits conformational changes from CF(0) to CF(1) or is implicated in proton conduction. In Neisseria meningitidis serogroup A / serotype 4A (strain DSM 15465 / Z2491), this protein is ATP synthase subunit delta.